Reading from the N-terminus, the 123-residue chain is U11/U12 small nuclear ribonucleoprotein 25 kDa protein (123 aa).

A Ubiquitin-like domain is found at 32–123 (MTVRVCKMDG…VSFIKKLRQK (92 aa)).

In terms of assembly, component of the U11/U12 snRNPs that are part of the U12-type spliceosome.

The protein resides in the nucleus. The polypeptide is U11/U12 small nuclear ribonucleoprotein 25 kDa protein (SNRNP25) (Bos taurus (Bovine)).